A 74-amino-acid polypeptide reads, in one-letter code: Anaphase-promoting complex subunit 13 (74 aa).

Residues 33-53 (LNELPEPEQDNGGTTESVKEQ) form a disordered region.

Belongs to the APC13 family. The mammalian APC/C is composed at least of 14 distinct subunits ANAPC1, ANAPC2, CDC27/APC3, ANAPC4, ANAPC5, CDC16/APC6, ANAPC7, CDC23/APC8, ANAPC10, ANAPC11, CDC26/APC12, ANAPC13, ANAPC15 and ANAPC16 that assemble into a complex of at least 19 chains with a combined molecular mass of around 1.2 MDa; APC/C interacts with FZR1 and FBXO5.

The protein localises to the nucleus. It participates in protein modification; protein ubiquitination. Its function is as follows. Component of the anaphase promoting complex/cyclosome (APC/C), a cell cycle-regulated E3 ubiquitin ligase that controls progression through mitosis and the G1 phase of the cell cycle. The APC/C complex acts by mediating ubiquitination and subsequent degradation of target proteins: it mainly mediates the formation of 'Lys-11'-linked polyubiquitin chains and, to a lower extent, the formation of 'Lys-48'- and 'Lys-63'-linked polyubiquitin chains. The APC/C complex catalyzes assembly of branched 'Lys-11'-/'Lys-48'-linked branched ubiquitin chains on target proteins. In Bos taurus (Bovine), this protein is Anaphase-promoting complex subunit 13 (ANAPC13).